Here is a 264-residue protein sequence, read N- to C-terminus: Indole-3-glycerol phosphate synthase (264 aa).

It belongs to the TrpC family.

It carries out the reaction 1-(2-carboxyphenylamino)-1-deoxy-D-ribulose 5-phosphate + H(+) = (1S,2R)-1-C-(indol-3-yl)glycerol 3-phosphate + CO2 + H2O. Its pathway is amino-acid biosynthesis; L-tryptophan biosynthesis; L-tryptophan from chorismate: step 4/5. The protein is Indole-3-glycerol phosphate synthase of Xylella fastidiosa (strain M12).